Reading from the N-terminus, the 508-residue chain is Photosystem II CP47 reaction center protein (508 aa).

The next 6 helical transmembrane spans lie at 21-36 (SVHI…WAGS), 101-115 (IVFS…IWHW), 140-156 (GIHL…FGAF), 203-218 (IAAG…FHLS), 237-252 (VLSS…AFVV), and 457-472 (SFAL…HGAR).

This sequence belongs to the PsbB/PsbC family. PsbB subfamily. PSII is composed of 1 copy each of membrane proteins PsbA, PsbB, PsbC, PsbD, PsbE, PsbF, PsbH, PsbI, PsbJ, PsbK, PsbL, PsbM, PsbT, PsbX, PsbY, PsbZ, Psb30/Ycf12, at least 3 peripheral proteins of the oxygen-evolving complex and a large number of cofactors. It forms dimeric complexes. It depends on Binds multiple chlorophylls. PSII binds additional chlorophylls, carotenoids and specific lipids. as a cofactor.

The protein localises to the plastid. Its subcellular location is the chloroplast thylakoid membrane. Functionally, one of the components of the core complex of photosystem II (PSII). It binds chlorophyll and helps catalyze the primary light-induced photochemical processes of PSII. PSII is a light-driven water:plastoquinone oxidoreductase, using light energy to abstract electrons from H(2)O, generating O(2) and a proton gradient subsequently used for ATP formation. In Morus indica (Mulberry), this protein is Photosystem II CP47 reaction center protein.